Reading from the N-terminus, the 121-residue chain is Large ribosomal subunit protein bL12 (121 aa).

This sequence belongs to the bacterial ribosomal protein bL12 family. In terms of assembly, homodimer. Part of the ribosomal stalk of the 50S ribosomal subunit. Forms a multimeric L10(L12)X complex, where L10 forms an elongated spine to which 2 to 4 L12 dimers bind in a sequential fashion. Binds GTP-bound translation factors.

In terms of biological role, forms part of the ribosomal stalk which helps the ribosome interact with GTP-bound translation factors. Is thus essential for accurate translation. This Pseudomonas fluorescens (strain Pf0-1) protein is Large ribosomal subunit protein bL12.